Here is a 258-residue protein sequence, read N- to C-terminus: Phosphoadenosine 5'-phosphosulfate reductase (258 aa).

The active-site Nucleophile; cysteine thiosulfonate intermediate is the Cys-244.

This sequence belongs to the PAPS reductase family. CysH subfamily.

It localises to the cytoplasm. It catalyses the reaction [thioredoxin]-disulfide + sulfite + adenosine 3',5'-bisphosphate + 2 H(+) = [thioredoxin]-dithiol + 3'-phosphoadenylyl sulfate. Its pathway is sulfur metabolism; hydrogen sulfide biosynthesis; sulfite from sulfate: step 3/3. Catalyzes the formation of sulfite from phosphoadenosine 5'-phosphosulfate (PAPS) using thioredoxin as an electron donor. This is Phosphoadenosine 5'-phosphosulfate reductase from Vibrio vulnificus (strain CMCP6).